A 472-amino-acid chain; its full sequence is Probable low-salt glycan biosynthesis flippase Agl15 (472 aa).

13 helical membrane-spanning segments follow: residues 8–28 (IKLFIANIFGAGLQFLGITFF), 38–58 (GVFFLFQALLGIVAIPADFGL), 77–97 (SSAIILKLIPISLIILSIVVF), 109–129 (FAVYLALAIILQETAQLAVSV), 164–184 (AEALIYSLLAGMVVTLAWGLS), 209–229 (VVSSIGGYFYSWMDVAIIGIF), 244–264 (VTAITMLFSQAVASTIFPQVS), 289–309 (LVIPAFFGILVFSDEIMGIVF), 315–335 (IASYVLIILAGEKILQSVHVI), 354–374 (VISVVLNLILNVILILSFGIV), 375–395 (GAAVATALSFAVNTVLHAHYL), 408–428 (IGWCTVSSLIMAGVLFGFKTL), and 434–454 (LIQLFIGIFFGMLVYTTITLL).

It belongs to the AglR/Agl15 family.

The protein resides in the cell membrane. The protein operates within protein modification; protein glycosylation. It functions in the pathway cell surface structure biogenesis; S-layer biogenesis. Its function is as follows. Flippase involved in N-glycan biosynthetic pathway that takes place under low-salt conditions (1.75 M instead of 3.4 M). Participates in the formation of the tetrasaccharide present at 'Asn-532' of S-layer glycoprotein Csg, consisting of a sulfated hexose, 2 hexoses and rhamnose. Probably moves the tetrasaccharide from the cytosolic to the extracytosolic side of the membrane. In Haloferax volcanii (strain ATCC 29605 / DSM 3757 / JCM 8879 / NBRC 14742 / NCIMB 2012 / VKM B-1768 / DS2) (Halobacterium volcanii), this protein is Probable low-salt glycan biosynthesis flippase Agl15 (agl15).